Consider the following 29-residue polypeptide: Glucagon (29 aa).

This sequence belongs to the glucagon family.

The protein resides in the secreted. Functionally, glucagon plays a key role in glucose metabolism and homeostasis. Regulates blood glucose by increasing gluconeogenesis and decreasing glycolysis. The sequence is that of Glucagon (gcg) from Callorhinchus milii (Ghost shark).